Reading from the N-terminus, the 411-residue chain is Na(+)-translocating NADH-quinone reductase subunit B (411 aa).

The next 3 membrane-spanning stretches (helical) occupy residues 56–76 (IMIT…YNAG), 121–141 (FLPI…LFAV), and 161–181 (ILPA…GVVI). Thr228 bears the FMN phosphoryl threonine mark. 5 helical membrane-spanning segments follow: residues 254 to 274 (FIPG…AAVL), 284 to 304 (IMLG…AIGS), 309 to 329 (MFGM…GMVF), 345 to 365 (LLFG…NPAF), and 368 to 388 (GIML…HFFV).

The protein belongs to the NqrB/RnfD family. In terms of assembly, composed of six subunits; NqrA, NqrB, NqrC, NqrD, NqrE and NqrF. The cofactor is FMN.

Its subcellular location is the cell inner membrane. The catalysed reaction is a ubiquinone + n Na(+)(in) + NADH + H(+) = a ubiquinol + n Na(+)(out) + NAD(+). Functionally, NQR complex catalyzes the reduction of ubiquinone-1 to ubiquinol by two successive reactions, coupled with the transport of Na(+) ions from the cytoplasm to the periplasm. NqrA to NqrE are probably involved in the second step, the conversion of ubisemiquinone to ubiquinol. The sequence is that of Na(+)-translocating NADH-quinone reductase subunit B from Chromohalobacter salexigens (strain ATCC BAA-138 / DSM 3043 / CIP 106854 / NCIMB 13768 / 1H11).